The chain runs to 200 residues: 3-isopropylmalate dehydratase small subunit (200 aa).

The protein belongs to the LeuD family. LeuD type 1 subfamily. Heterodimer of LeuC and LeuD.

It catalyses the reaction (2R,3S)-3-isopropylmalate = (2S)-2-isopropylmalate. It participates in amino-acid biosynthesis; L-leucine biosynthesis; L-leucine from 3-methyl-2-oxobutanoate: step 2/4. In terms of biological role, catalyzes the isomerization between 2-isopropylmalate and 3-isopropylmalate, via the formation of 2-isopropylmaleate. This is 3-isopropylmalate dehydratase small subunit from Sodalis glossinidius (strain morsitans).